The following is a 467-amino-acid chain: ATP-dependent protease ATPase subunit HslU (467 aa).

Residues Val20, 62-67 (GVGKTE), Asp280, Glu345, and Arg417 contribute to the ATP site.

The protein belongs to the ClpX chaperone family. HslU subfamily. As to quaternary structure, a double ring-shaped homohexamer of HslV is capped on each side by a ring-shaped HslU homohexamer. The assembly of the HslU/HslV complex is dependent on binding of ATP.

It localises to the cytoplasm. Functionally, ATPase subunit of a proteasome-like degradation complex; this subunit has chaperone activity. The binding of ATP and its subsequent hydrolysis by HslU are essential for unfolding of protein substrates subsequently hydrolyzed by HslV. HslU recognizes the N-terminal part of its protein substrates and unfolds these before they are guided to HslV for hydrolysis. In Enterococcus faecalis (strain ATCC 700802 / V583), this protein is ATP-dependent protease ATPase subunit HslU.